A 32-amino-acid chain; its full sequence is Cyclotide glopa B (32 aa).

Positions 1-32 form a cross-link, cyclopeptide (Gly-Asn); it reads GGSVPCIETCVWTGCFLVPGCSCKSDKKCYLN. 3 disulfide bridges follow: cysteine 6–cysteine 21, cysteine 10–cysteine 23, and cysteine 15–cysteine 29.

In terms of processing, this is a cyclic peptide.

Probably participates in a plant defense mechanism. This chain is Cyclotide glopa B, found in Gloeospermum pauciflorum.